A 267-amino-acid polypeptide reads, in one-letter code: Putative hydro-lyase RALTA_B1245 (267 aa).

Belongs to the D-glutamate cyclase family.

In Cupriavidus taiwanensis (strain DSM 17343 / BCRC 17206 / CCUG 44338 / CIP 107171 / LMG 19424 / R1) (Ralstonia taiwanensis (strain LMG 19424)), this protein is Putative hydro-lyase RALTA_B1245.